An 894-amino-acid chain; its full sequence is CWF19-like protein 2 (894 aa).

Residues 1–147 (MATSMAAASG…DEKSGKDDTQ (147 aa)) form a disordered region. Positions 13–56 (ESAKSIEERKEQTRNARAEVLRQAKANFEKEERRKELKRLRGED) are enriched in basic and acidic residues. Residues 13-107 (ESAKSIEERK…KKQKYEKNNE (95 aa)) adopt a coiled-coil conformation. S75 is subject to Phosphoserine. Basic residues predominate over residues 76–99 (VKKKKKKDKHSKKAKKEKKKKSKK). Basic and acidic residues predominate over residues 128–147 (PDKEKAWKVKDEKSGKDDTQ). Residues 166 to 281 (SSSSLKAEKE…AEKAASTKED (116 aa)) adopt a coiled-coil conformation. Residue K171 forms a Glycyl lysine isopeptide (Lys-Gly) (interchain with G-Cter in SUMO2) linkage. Residues 270–284 (EDAEKAASTKEDYRR) show a composition bias toward basic and acidic residues. The disordered stretch occupies residues 270–483 (EDAEKAASTK…STFAGSPERE (214 aa)). A compositionally biased stretch (polar residues) spans 320-330 (TTDTAKNSNNE). The segment covering 332–352 (FIGDEKDKRPGSLETCRRESN) has biased composition (basic and acidic residues). Phosphoserine is present on residues S360 and S372. Basic and acidic residues-rich tracts occupy residues 410–430 (KNSE…DKKH) and 440–473 (TDEH…RDTK). S479 and S484 each carry phosphoserine. Positions 502–530 (KAEMMGNMELAEQLKVQLEKANKFKETIT) form a coiled coil. The interval 561–583 (NTPGKSLESQGGRRKRQMVSTHE) is disordered. Residue K604 forms a Glycyl lysine isopeptide (Lys-Gly) (interchain with G-Cter in SUMO2) linkage. Positions 644–675 (AAERERLGEEEENQRKKAIAEHRSLAAQMEKC) form a coiled coil.

This sequence belongs to the CWF19 family.

The chain is CWF19-like protein 2 (CWF19L2) from Homo sapiens (Human).